A 140-amino-acid chain; its full sequence is Nucleoside diphosphate kinase (140 aa).

Positions 11, 59, 87, 93, 104, and 114 each coordinate ATP. His117 functions as the Pros-phosphohistidine intermediate in the catalytic mechanism.

The protein belongs to the NDK family. As to quaternary structure, homotetramer. Requires Mg(2+) as cofactor.

It localises to the cytoplasm. The enzyme catalyses a 2'-deoxyribonucleoside 5'-diphosphate + ATP = a 2'-deoxyribonucleoside 5'-triphosphate + ADP. The catalysed reaction is a ribonucleoside 5'-diphosphate + ATP = a ribonucleoside 5'-triphosphate + ADP. Its function is as follows. Major role in the synthesis of nucleoside triphosphates other than ATP. The ATP gamma phosphate is transferred to the NDP beta phosphate via a ping-pong mechanism, using a phosphorylated active-site intermediate. This is Nucleoside diphosphate kinase from Xanthobacter autotrophicus (strain ATCC BAA-1158 / Py2).